Reading from the N-terminus, the 565-residue chain is Liver carboxylesterase 1 (565 aa).

An N-terminal signal peptide occupies residues 1 to 18 (MWLCALSLISLTACLSLG). Cys87 and Cys116 form a disulfide bridge. The Acyl-ester intermediate role is filled by Ser221. Cys273 and Cys284 are disulfide-bonded. The active-site Charge relay system is Glu353. Ser378 carries the post-translational modification Phosphoserine. N-linked (GlcNAc...) asparagine glycosylation occurs at Asn388. The active-site Charge relay system is His466. N-linked (GlcNAc...) asparagine glycosylation occurs at Asn489.

This sequence belongs to the type-B carboxylesterase/lipase family. Homotrimer and homohexamer. Binds to beta-glucuronidase. In terms of tissue distribution, detected in kidney, liver and lung.

It is found in the endoplasmic reticulum lumen. It localises to the cytoplasm. The protein localises to the lipid droplet. The enzyme catalyses a carboxylic ester + H2O = an alcohol + a carboxylate + H(+). The catalysed reaction is cholesteryl (9Z-octadecenoate) + H2O = cholesterol + (9Z)-octadecenoate + H(+). It catalyses the reaction 2-(5Z,8Z,11Z,14Z-eicosatetraenoyl)-glycerol + H2O = glycerol + (5Z,8Z,11Z,14Z)-eicosatetraenoate + H(+). It carries out the reaction prostaglandin E2 1-glyceryl ester + H2O = prostaglandin E2 + glycerol + H(+). The enzyme catalyses a cholesterol ester + H2O = cholesterol + a fatty acid + H(+). The catalysed reaction is prostaglandin F2alpha 1-glyceryl ester + H2O = prostaglandin F2alpha + glycerol + H(+). In terms of biological role, involved in the detoxification of xenobiotics and in the activation of ester and amide prodrugs. Hydrolyzes aromatic and aliphatic esters, but has no catalytic activity toward amides or a fatty acyl-CoA ester. Displays fatty acid ethyl ester synthase activity, catalyzing the ethyl esterification of oleic acid to ethyloleate. Converts monoacylglycerides to free fatty acids and glycerol. Hydrolyzes of 2-arachidonoylglycerol and prostaglandins. Hydrolyzes cellular cholesteryl esters to free cholesterols and promotes reverse cholesterol transport (RCT) by facilitating both the initial and final steps in the process. First of all, allows free cholesterol efflux from macrophages to extracellular cholesterol acceptors and secondly, releases free cholesterol from lipoprotein-delivered cholesteryl esters in the liver for bile acid synthesis or direct secretion into the bile. The protein is Liver carboxylesterase 1 of Mus musculus (Mouse).